The chain runs to 444 residues: Protein translocase subunit SecY (444 aa).

Transmembrane regions (helical) follow at residues 24-44 (FFVI…IPGI), 77-97 (ILAL…LLTV), 123-143 (GTLV…PNMV), 153-173 (MFTL…MWLG), 181-201 (IGNG…PKAI), 215-235 (VLLL…VVFM), 269-289 (MAGV…GTLA), 318-338 (YVML…ALVF), 376-396 (LAGA…MVAW), and 400-420 (FYFG…FMAQ).

This sequence belongs to the SecY/SEC61-alpha family. As to quaternary structure, component of the Sec protein translocase complex. Heterotrimer consisting of SecY, SecE and SecG subunits. The heterotrimers can form oligomers, although 1 heterotrimer is thought to be able to translocate proteins. Interacts with the ribosome. Interacts with SecDF, and other proteins may be involved. Interacts with SecA.

Its subcellular location is the cell inner membrane. Its function is as follows. The central subunit of the protein translocation channel SecYEG. Consists of two halves formed by TMs 1-5 and 6-10. These two domains form a lateral gate at the front which open onto the bilayer between TMs 2 and 7, and are clamped together by SecE at the back. The channel is closed by both a pore ring composed of hydrophobic SecY resides and a short helix (helix 2A) on the extracellular side of the membrane which forms a plug. The plug probably moves laterally to allow the channel to open. The ring and the pore may move independently. The polypeptide is Protein translocase subunit SecY (Vibrio cholerae serotype O1 (strain ATCC 39315 / El Tor Inaba N16961)).